The following is a 1242-amino-acid chain: Reverse gyrase 1 (1242 aa).

An RG N-terminal-type zinc finger spans residues 6–46; that stretch reads KVPPSIYTRSCPNCGGNISSQRLFNGSVCESCLKDDREFSN. Zn(2+) contacts are provided by Cys16, Cys19, Cys34, and Cys37. ATP contacts are provided by residues Gln93 and 110–117; that span reads APPGLGKT. The Helicase ATP-binding domain occupies 97–298; that stretch reads TIRFLRGESF…SLMGFRPGSS (202 aa). The short motif at 214–217 is the DEAD box element; that stretch reads DDVD. Positions 615–1242 are topoisomerase I; the sequence is LSVKTTLFIV…ELYNEIQTIS (628 aa). Positions 619 to 785 constitute a Toprim domain; sequence TTLFIVESPN…NIKRAEFHEV (167 aa). Glu625 provides a ligand contact to Mg(2+). The RG C-terminal-type; atypical zinc finger occupies 703–731; the sequence is IKKCEKGHQIVKDLSQNKCPICGSRIVTD. Cys706, His710, Cys721, and Cys724 together coordinate Zn(2+). Mg(2+) is bound at residue Asp754. The Topo IA-type catalytic domain maps to 801 to 1242; that stretch reads NDNLVKSQIV…ELYNEIQTIS (442 aa). The active-site O-(5'-phospho-DNA)-tyrosine intermediate is the Tyr965.

The protein in the N-terminal section; belongs to the DEAD box helicase family. DDVD subfamily. It in the C-terminal section; belongs to the type IA topoisomerase family. As to quaternary structure, monomer. It depends on Zn(2+) as a cofactor. The cofactor is Mg(2+).

It is found in the cytoplasm. It catalyses the reaction ATP + H2O = ADP + phosphate + H(+). With respect to regulation, at least one of the two reverse gyrase proteins is inhibited by actinomycin D. Highly sensitive to NaCl concentrations, maximal positive supercoiling is observed with 10 mM NaCl; as NaCl rises, supercoiling decreases. At 300 mM NaCl relaxes but does not introduce positive supercoils into negatively supercoiled substrate, at 400 mM NaCl does not relax DNA. Modifies the topological state of DNA by introducing positive supercoils in an ATP-dependent process. Increases the linking number in steps of +1. Involved in homeostatic control of DNA topology in balance with type II topoisomerase 6 (TopoVI); levels of TopoVI are constant at 80 and 88 degrees Celsius and TopoVI is probably less active at 88 degrees (characterized enzyme is from S.shibatae B12), so reverse gyrase mediates most of the fine-tuning of DNA topology. Changes the DNA linking number step-by-step in a distributive manner. At low protein to DNA ratios mostly relaxes negatively supercoiled substrate, as ratios rise more positive supercoils are introduced. At 90 degrees Celsius introduces 19 positive supercoils into pTZ18R DNA (probably 2860 bp), less than TopR2. Relaxes negatively supercoiled DNA in the absence of ATP. It cleaves transiently a single DNA strand and remains covalently bound to the 5' DNA end through a tyrosine residue. May be involved in DNA damage response. Its activity is inhibited by the DNA-binding protein 7d (Sso7d), suggesting that the Sso7d activity might counteract the overwinding effect of reverse gyrase. Functionally, resolves 4-way Holliday junctions (HJ) with 20 bases in each arm in vitro, distorting the junction. Very high protein levels are required, but total enzyme content of the cell (there are 2 reverse gyrases in this organism) is estimated to be 20-200 molecules/cell. HJ resolution does not require either ATPase activity or the active tyrosine. The individual domains do not resolve HJs but do so when mixed. Also unwinds a fork substrate. In terms of biological role, there are 2 genes for this protein in the cell. During exponential growth this is the less expressed isoform (about 52 molecules per cell at 80 degrees Celsius, about 28 molecules at 88 degrees Celsius); this isoform is more active at higher temperature. Grows actively at both 80 and 88 degrees Celsius; survives a long exposure at 45 degrees Celsius without DNA replication or cell division occurring. Experiments using whole cell extracts do not distinguish which isoform is present, the results are probably a mixture of the two forms. The chain is Reverse gyrase 1 from Saccharolobus solfataricus (strain ATCC 35092 / DSM 1617 / JCM 11322 / P2) (Sulfolobus solfataricus).